Consider the following 125-residue polypeptide: Phosphoribosyl-AMP cyclohydrolase (125 aa).

Residue aspartate 86 coordinates Mg(2+). Cysteine 87 contributes to the Zn(2+) binding site. Mg(2+) is bound by residues aspartate 88 and aspartate 90. Zn(2+)-binding residues include cysteine 103 and cysteine 110.

The protein belongs to the PRA-CH family. As to quaternary structure, homodimer. The cofactor is Mg(2+). Requires Zn(2+) as cofactor.

It is found in the cytoplasm. It catalyses the reaction 1-(5-phospho-beta-D-ribosyl)-5'-AMP + H2O = 1-(5-phospho-beta-D-ribosyl)-5-[(5-phospho-beta-D-ribosylamino)methylideneamino]imidazole-4-carboxamide. It functions in the pathway amino-acid biosynthesis; L-histidine biosynthesis; L-histidine from 5-phospho-alpha-D-ribose 1-diphosphate: step 3/9. Catalyzes the hydrolysis of the adenine ring of phosphoribosyl-AMP. In Erythrobacter litoralis (strain HTCC2594), this protein is Phosphoribosyl-AMP cyclohydrolase.